A 173-amino-acid chain; its full sequence is Crossover junction endodeoxyribonuclease RuvC (173 aa).

Catalysis depends on residues Asp8, Glu67, and Asp139. Positions 8, 67, and 139 each coordinate Mg(2+).

Belongs to the RuvC family. In terms of assembly, homodimer which binds Holliday junction (HJ) DNA. The HJ becomes 2-fold symmetrical on binding to RuvC with unstacked arms; it has a different conformation from HJ DNA in complex with RuvA. In the full resolvosome a probable DNA-RuvA(4)-RuvB(12)-RuvC(2) complex forms which resolves the HJ. The cofactor is Mg(2+).

It localises to the cytoplasm. It carries out the reaction Endonucleolytic cleavage at a junction such as a reciprocal single-stranded crossover between two homologous DNA duplexes (Holliday junction).. The RuvA-RuvB-RuvC complex processes Holliday junction (HJ) DNA during genetic recombination and DNA repair. Endonuclease that resolves HJ intermediates. Cleaves cruciform DNA by making single-stranded nicks across the HJ at symmetrical positions within the homologous arms, yielding a 5'-phosphate and a 3'-hydroxyl group; requires a central core of homology in the junction. The consensus cleavage sequence is 5'-(A/T)TT(C/G)-3'. Cleavage occurs on the 3'-side of the TT dinucleotide at the point of strand exchange. HJ branch migration catalyzed by RuvA-RuvB allows RuvC to scan DNA until it finds its consensus sequence, where it cleaves and resolves the cruciform DNA. The sequence is that of Crossover junction endodeoxyribonuclease RuvC from Vibrio parahaemolyticus serotype O3:K6 (strain RIMD 2210633).